The sequence spans 940 residues: UvrABC system protein A (940 aa).

An ATP-binding site is contributed by 33-40; the sequence is GVSGSGKS. The C4-type zinc finger occupies 252–279; that stretch reads CPVCGFTVPELEPRLFSFNAPFGSCPDC. ABC transporter domains lie at 309-586 and 606-935; these read WYGK…KKSL and IDKK…QYLK. 639-646 lines the ATP pocket; the sequence is GVSGSGKS. Residues 738–764 form a C4-type zinc finger; sequence CEACSGDGIIKIEMHFLPDVYVPCEVC.

Belongs to the ABC transporter superfamily. UvrA family. As to quaternary structure, forms a heterotetramer with UvrB during the search for lesions.

Its subcellular location is the cytoplasm. Its function is as follows. The UvrABC repair system catalyzes the recognition and processing of DNA lesions. UvrA is an ATPase and a DNA-binding protein. A damage recognition complex composed of 2 UvrA and 2 UvrB subunits scans DNA for abnormalities. When the presence of a lesion has been verified by UvrB, the UvrA molecules dissociate. This chain is UvrABC system protein A, found in Lactococcus lactis subsp. lactis (strain IL1403) (Streptococcus lactis).